The chain runs to 888 residues: Lon protease homolog 2, peroxisomal (888 aa).

Residues L11 to L255 enclose the Lon N-terminal domain. Residue G408–T415 coordinates ATP. Positions V692–G877 constitute a Lon proteolytic domain. Residues S783 and K826 contribute to the active site. The Microbody targeting signal signature appears at S886–L888.

The protein belongs to the peptidase S16 family.

Its subcellular location is the peroxisome matrix. The enzyme catalyses Hydrolysis of proteins in presence of ATP.. ATP-dependent serine protease that mediates the selective degradation of misfolded and unassembled polypeptides in the peroxisomal matrix. Necessary for type 2 peroxisome targeting signal (PTS2)-containing protein processing and facilitates peroxisome matrix protein import. The polypeptide is Lon protease homolog 2, peroxisomal (LON2) (Arabidopsis thaliana (Mouse-ear cress)).